Consider the following 269-residue polypeptide: Type 4 prepilin-like proteins leader peptide-processing enzyme (269 aa).

Helical transmembrane passes span 13–33 (MPVL…VVIW), 102–122 (YPLV…VWPE), 124–144 (GWAL…VIDL), 147–167 (QWLP…AAWA), 178–198 (VTGV…AGIV), 210–230 (LLFA…VALI), and 249–269 (LPFG…QALF).

Belongs to the peptidase A24 family.

The protein localises to the cell inner membrane. The enzyme catalyses Typically cleaves a -Gly-|-Phe- bond to release an N-terminal, basic peptide of 5-8 residues from type IV prepilin, and then N-methylates the new N-terminal amino group, the methyl donor being S-adenosyl-L-methionine.. Its function is as follows. Cleaves type-4 fimbrial leader sequence and methylates the N-terminal (generally Phe) residue. The polypeptide is Type 4 prepilin-like proteins leader peptide-processing enzyme (Escherichia coli O78:H11 (strain H10407 / ETEC)).